Here is a 475-residue protein sequence, read N- to C-terminus: Aspartyl/glutamyl-tRNA(Asn/Gln) amidotransferase subunit B (475 aa).

This sequence belongs to the GatB/GatE family. GatB subfamily. In terms of assembly, heterotrimer of A, B and C subunits.

It catalyses the reaction L-glutamyl-tRNA(Gln) + L-glutamine + ATP + H2O = L-glutaminyl-tRNA(Gln) + L-glutamate + ADP + phosphate + H(+). The catalysed reaction is L-aspartyl-tRNA(Asn) + L-glutamine + ATP + H2O = L-asparaginyl-tRNA(Asn) + L-glutamate + ADP + phosphate + 2 H(+). Its function is as follows. Allows the formation of correctly charged Asn-tRNA(Asn) or Gln-tRNA(Gln) through the transamidation of misacylated Asp-tRNA(Asn) or Glu-tRNA(Gln) in organisms which lack either or both of asparaginyl-tRNA or glutaminyl-tRNA synthetases. The reaction takes place in the presence of glutamine and ATP through an activated phospho-Asp-tRNA(Asn) or phospho-Glu-tRNA(Gln). This Bacillus anthracis (strain A0248) protein is Aspartyl/glutamyl-tRNA(Asn/Gln) amidotransferase subunit B.